Reading from the N-terminus, the 406-residue chain is Tyrosine--tRNA ligase (406 aa).

Y35 is an L-tyrosine binding site. Positions 40–49 (PTADSLHVGH) match the 'HIGH' region motif. L-tyrosine contacts are provided by Y168 and Q172. Residues 228 to 232 (KMGKT) carry the 'KMSKS' region motif. K231 contacts ATP. Positions 340–404 (STVLDIIAKT…RGKKNYNKIE (65 aa)) constitute an S4 RNA-binding domain.

This sequence belongs to the class-I aminoacyl-tRNA synthetase family. TyrS type 1 subfamily. In terms of assembly, homodimer.

The protein resides in the cytoplasm. It catalyses the reaction tRNA(Tyr) + L-tyrosine + ATP = L-tyrosyl-tRNA(Tyr) + AMP + diphosphate + H(+). In terms of biological role, catalyzes the attachment of tyrosine to tRNA(Tyr) in a two-step reaction: tyrosine is first activated by ATP to form Tyr-AMP and then transferred to the acceptor end of tRNA(Tyr). This chain is Tyrosine--tRNA ligase, found in Clostridium botulinum (strain Alaska E43 / Type E3).